A 2055-amino-acid polypeptide reads, in one-letter code: MGCTTSVILFKGIRTVFERNCAYMCKQPGESNALEYTAYNWSKEDSELSIAFCLAKPKLIEPLDYENVIVQKKTQILNDCLREMLLFPYDDFQTAILRRQGRYLRSTVPANAEEEAQSLFVTECIKTYNSDWHLVTYKYEDYSGEFRQLPNKVPKLDKLPVHVYEVDEEADKDEDAASLGSQKGGITKHGWLYKGNMNSAISVTMRSFKRRFFHLIQLGDGSYNLNFYKDEKISKEPKGSIFLDSCMGVIQNNRVRRFAFELKMQDKSSYLLAADSEAEMEEWVTVLNKILQLNFEAAMQEKRNGDPHEDDEQSKLEGSGSGLDSYLPELAKSTREAEIKLKSESRVKLFYLDPDTQKLDFSSAEPEVKPFEEKFGKRILVKCNDLSFNLQCCVAENEEGPTTNVEPFFVTLSLFDIKYNRKISADFHVDLNHFSVRQMLAPTSPALMNGGQSPPAFQDALHTAMQYPKQGIFSVTCPHPDIFLVARIEKVLQGSITHCAEPYMRSSDSSKVAQKVLKNAKQACQRLGQYRMPFAWAARTLFKDTSGNLDKNARFSAIYRQDSNKLSNDDMLKLLADFRKPEKMAKLPVILGNLDITIDSVSCDFPNYLNSSYIPMRQFETCSKSPITFEVEEFVPCIPKHTQPYTVYSNHLYVYPKYLKYDSQKSFAKARNIAICIEFKDSDEEDSQPLKCIYGRPGGPVFTRSALAAVLHHQQNPEFYDEIKIELPAQLHERHHLLFTFFHVSCDNSTKGSTKKKDAVETQVGFSWLPLLKDGRVLTSEQHIPVSANLPSGYLGYQELGMGRHYGPEVKWVEGGKPLLKISTHLVSTVYTQDQHLHNFFQYCQKTESGAQASGSELVKYLKSLHAMEGHVMIAFLPTILNQLFRVLTRATQEEVAVNVTRVIIHVVAQCHEEGLESHLRSYVKFAYKAEPYVASEYKTVHEELTKSMTTILKPSADFLTSNKLLKYSWFFFDVLIKSMAQHLIENNKVKLLRNQRFPASYHHAVETVVNMLMPHITQKFRDNPEASKNANHSLAVFIKRCFTFMDRGFVFKQINNYISCFAPGDPKTLFEYKFEFLRVVCNHEHYIPLNLPMPFGKGRIQRYQDLQLDYSLTDEFCRNHFLVGLLLREVGTALQEFREVRVIAISMLKNLLIKHSFDDRYNSRSHQARIATLYLPLFGLLIENVQRINVRDVSPFPVNPGSIVKDEALAVPAGNPLMTPQKGNTLDHSLHKDLLGAISGIASPYTASTPNINSVRNADSRGSLISTDSGNSLPDRNPEKSNSLDKQQQSGMLGNSVVRCDKLDQSEIKSLLMCFLYVLKSMSDDALFTYWNKASTAELMDFFTISEVCLHQFQYMGKRYIARTGMMHARLQQLGSLDNSVTFNHSYGHSEADVVHQSLLEANIATEVCLTALDTLSLFTLAFKNQLLADHGHNPLMKKVFDVYLCFLQKHQSEMALKNVFTALRSLIYKFPSAFYEGRADMCASLCYEVLKCCNSKLSSIRTEASQLLYFLMRNNFDYTGKKSFVRTHLQVIISVSQLIADVVGIGGTRFQQSLSIINNCANSDRIIKHTSFSSDVKDLTKRIRTVLMATAQMKEHENDPEMLVDLQYSLAKSYASTPELRKTWLDSMARIHVKNGDLSEAAMCYVHVTALVAEYLTRKGMFRQGCTAFRVITPNIDEEASMMEDVGMQDVHFNEDVLMELLEQCADGLWKAERYELIADIYKLIIPIYEKRRDFERLAHLYDTLHRAYSKVTEVMHSGRRLLGTYFRVAFFGQAAQYQFTDSETDVEGFFEDEDGKEYIYKEPKLTPLSEISQRLLKLYSDKFGSENVKMIQDSGKVNPKDLDSKFAYIQVTHVTPFFDEKELQERRTEFERCHNIRRFMFEMPFTQTGKRQGGVEEQCKRRTILTAIHCFPYVKKRIPVMYQHHTDLNPIEVAIDEMSKKVAELRQLCSSAEVDMIKLQLKLQGSVSVQVNAGPLAYARAFLDDTNTKRYPDNKVKLLKEVFRQFVEACGQALAVNERLIKEDQLEYQEEMKANYREMAKELSDIMREQMG.

Ser-178 and Ser-181 each carry phosphoserine. Positions 185-292 (GITKHGWLYK…WVTVLNKILQ (108 aa)) constitute a PH domain. Positions 301-326 (EKRNGDPHEDDEQSKLEGSGSGLDSY) are disordered. Phosphoserine occurs at positions 444 and 453. The 179-residue stretch at 649-827 (SNHLYVYPKY…PLLKISTHLV (179 aa)) folds into the C2 DOCK-type domain. Phosphoserine occurs at positions 936 and 1244. A Phosphothreonine modification is found at Thr-1250. A disordered region spans residues 1253-1291 (INSVRNADSRGSLISTDSGNSLPDRNPEKSNSLDKQQQS). Residues Ser-1264, Ser-1270, and Ser-1273 each carry the phosphoserine modification. Residues 1264–1276 (SLISTDSGNSLPD) are compositionally biased toward polar residues. The region spanning 1614–2055 (KSYASTPELR…LSDIMREQMG (442 aa)) is the DOCKER domain. Residues 1679-2055 (DEEASMMEDV…LSDIMREQMG (377 aa)) are interaction with CDC42.

It belongs to the DOCK family. Homodimer. Interacts preferentially with nucleotide-depleted CDC42. In terms of tissue distribution, expressed in lung. Also detected in Peyers patches, thymus, brain and lymph nodes. Expressed in Purkinje cells.

The protein localises to the endomembrane system. Its function is as follows. Guanine nucleotide-exchange factor (GEF) that activates CDC42 by exchanging bound GDP for free GTP. Overexpression induces filopodia formation. This Mus musculus (Mouse) protein is Dedicator of cytokinesis protein 9.